The following is a 333-amino-acid chain: Ribosomal RNA small subunit methyltransferase C (333 aa).

This sequence belongs to the methyltransferase superfamily. RsmC family. As to quaternary structure, monomer.

Its subcellular location is the cytoplasm. The catalysed reaction is guanosine(1207) in 16S rRNA + S-adenosyl-L-methionine = N(2)-methylguanosine(1207) in 16S rRNA + S-adenosyl-L-homocysteine + H(+). Functionally, specifically methylates the guanine in position 1207 of 16S rRNA in the 30S particle. This chain is Ribosomal RNA small subunit methyltransferase C, found in Actinobacillus succinogenes (strain ATCC 55618 / DSM 22257 / CCUG 43843 / 130Z).